Here is a 756-residue protein sequence, read N- to C-terminus: Ent-kaur-16-ene synthase, chloroplastic (756 aa).

4 residues coordinate Mg(2+): Asp-496, Asp-500, Asn-639, and Glu-647. A DDXXD motif motif is present at residues 496–500 (DDFFD).

The protein belongs to the terpene synthase family. Mg(2+) serves as cofactor. Highly expressed in panicles and at lower levels in leaves and stems.

It localises to the plastid. The protein localises to the chloroplast. The catalysed reaction is ent-copalyl diphosphate = ent-kaur-16-ene + diphosphate. Its pathway is plant hormone biosynthesis; gibberellin biosynthesis. Its function is as follows. Catalyzes the conversion of ent-copalyl diphosphate to the gibberellin precursor ent-kaur-16-ene. This chain is Ent-kaur-16-ene synthase, chloroplastic (KS1), found in Oryza sativa subsp. japonica (Rice).